The sequence spans 898 residues: Serine/threonine-protein kinase TAO3 (898 aa).

The Protein kinase domain occupies 24 to 277 (FIDLHEIGHG…AAELLRHDFI (254 aa)). Residues 30–38 (IGHGSFGAV) and lysine 53 each bind ATP. Aspartate 147 (proton acceptor) is an active-site residue. 2 disordered regions span residues 316-372 (TRNG…EVMD) and 405-424 (DEAG…SVQS). Serine 324, serine 331, serine 343, serine 346, and serine 349 each carry phosphoserine. Residues 349-366 (SIPSVSVSTGSRSSSVNS) show a composition bias toward low complexity. Threonine 357 is subject to Phosphothreonine. At serine 359 the chain carries Phosphoserine. The segment covering 405–416 (DEAGHGDPRPEP) has biased composition (basic and acidic residues). Serine 442 carries the phosphoserine modification. Coiled-coil stretches lie at residues 452-502 (EQEN…THAN), 548-649 (FLES…HAML), and 753-871 (ILKT…QERE). The interval 565–596 (EEMNEDHSTPKKEKQERISKHKENLQHTQAEE) is disordered. Residue lysine 830 is modified to N6-acetyllysine.

This sequence belongs to the protein kinase superfamily. STE Ser/Thr protein kinase family. STE20 subfamily. Self-associates. Interacts with ERN1 and TRAF2. Interaction with TRAF2 is facilitated under ER stress conditions, such as treatment with tunicamycin, and may promote TRAF2 phosphorylation. Interacts (via N-terminus) with STK25; the interaction promotes STK25 abundance at the level of protein expression and/or stability. Autophosphorylated. Phosphorylation at Ser-324 by ATM following DNA damage is required for activation of the p38/MAPK14 stress-activated MAPK cascade. Phosphorylated at Ser-324 and on Tyr residues during T cell activation. Phosphorylated by LRRK2. Ubiquitously expressed, with a higher expression in the retina.

It is found in the cytoplasm. It localises to the cell membrane. The protein resides in the membrane raft. The protein localises to the lipid droplet. It catalyses the reaction L-seryl-[protein] + ATP = O-phospho-L-seryl-[protein] + ADP + H(+). It carries out the reaction L-threonyl-[protein] + ATP = O-phospho-L-threonyl-[protein] + ADP + H(+). In terms of biological role, serine/threonine-protein kinase that acts as a regulator of the p38/MAPK14 stress-activated MAPK cascade and of the MAPK8/JNK cascade. In response to DNA damage, involved in the G2/M transition DNA damage checkpoint by activating the p38/MAPK14 stress-activated MAPK cascade, probably by mediating phosphorylation of upstream MAP2K3 and MAP2K6 kinases. Inhibits basal activity of the MAPK8/JNK cascade and diminishes its activation in response to epidermal growth factor (EGF). Positively regulates canonical T cell receptor (TCR) signaling by preventing early PTPN6/SHP1-mediated inactivation of LCK, ensuring sustained TCR signaling that is required for optimal activation and differentiation of T cells. Phosphorylates PTPN6/SHP1 on 'Thr-396', leading to its polyubiquitination and subsequent proteasomal degradation. Required for cell surface expression of metalloprotease ADAM10 on type 1 transitional B cells which is necessary for their NOTCH-mediated development into marginal zone B cells. Also required for the NOTCH-mediated terminal differentiation of splenic conventional type 2 dendritic cells. Positively regulates osteoblast differentiation by acting as an upstream activator of the JNK pathway. Promotes JNK signaling in hepatocytes and positively regulates hepatocyte lipid storage by inhibiting beta-oxidation and triacylglycerol secretion while enhancing lipid synthesis. Restricts age-associated inflammation by negatively regulating differentiation of macrophages and their production of pro-inflammatory cytokines. Plays a role in negatively regulating the abundance of regulatory T cells in white adipose tissue. This chain is Serine/threonine-protein kinase TAO3 (Taok3), found in Rattus norvegicus (Rat).